Consider the following 318-residue polypeptide: Olfactory receptor 5G26 (318 aa).

The Extracellular portion of the chain corresponds to 1–28 (MMHRNQTVVTEFFFTGLTSSFHLQIVLF). Asn-5 carries N-linked (GlcNAc...) asparagine glycosylation. Residues 29-49 (LTFLCVYLATLLGNLGMIILI) traverse the membrane as a helical segment. The Cytoplasmic segment spans residues 50–56 (HLDTRLH). Residues 57-77 (IPMYFFLSHLSFVDACSSSVI) form a helical membrane-spanning segment. Over 78–93 (SPKMLSDMFVDKKVIS) the chain is Extracellular. The chain crosses the membrane as a helical span at residues 94–114 (FLGCAIQLCLFSQFVVTECFL). The cysteines at positions 97 and 189 are disulfide-linked. The Cytoplasmic segment spans residues 115 to 144 (LASMAYDRYVAICKPLLYTLIMSQRVCVQL). A helical transmembrane segment spans residues 145–165 (VIGPYSIGFVSTMVHIISAFV). Over 166-198 (LPYCGPNLINHFFCDLLPVLSLACANTQMKKRL) the chain is Extracellular. The helical transmembrane segment at 199–219 (LFIVAGILGVFSGIIILVSYV) threads the bilayer. The Cytoplasmic segment spans residues 220–239 (YIAITILKISSADGRRKAFS). The chain crosses the membrane as a helical span at residues 240–260 (TCSSHLTAVSILYGTLFFIYV). Residues 261–271 (RPSSSFSLDIN) lie on the Extracellular side of the membrane. Residues 272 to 292 (KVVSLFYTTVIPMLNPFIYSL) traverse the membrane as a helical segment. The Cytoplasmic segment spans residues 293-318 (RNKEVKDALIRTFEKQFCYSFQDKIL).

The protein belongs to the G-protein coupled receptor 1 family.

Its subcellular location is the cell membrane. Functionally, potential odorant receptor. The sequence is that of Olfactory receptor 5G26 from Mus musculus (Mouse).